Reading from the N-terminus, the 405-residue chain is Tryptophan synthase beta chain (405 aa).

Position 98 is an N6-(pyridoxal phosphate)lysine (lysine 98).

The protein belongs to the TrpB family. As to quaternary structure, tetramer of two alpha and two beta chains. It depends on pyridoxal 5'-phosphate as a cofactor.

It carries out the reaction (1S,2R)-1-C-(indol-3-yl)glycerol 3-phosphate + L-serine = D-glyceraldehyde 3-phosphate + L-tryptophan + H2O. It functions in the pathway amino-acid biosynthesis; L-tryptophan biosynthesis; L-tryptophan from chorismate: step 5/5. Functionally, the beta subunit is responsible for the synthesis of L-tryptophan from indole and L-serine. The chain is Tryptophan synthase beta chain from Stenotrophomonas maltophilia (strain R551-3).